The primary structure comprises 212 residues: Outer-membrane lipoprotein carrier protein (212 aa).

The N-terminal stretch at 1–25 is a signal peptide; that stretch reads MRKRILVSACAALAVFAAHMPTALA.

This sequence belongs to the LolA family. Monomer.

It localises to the periplasm. Functionally, participates in the translocation of lipoproteins from the inner membrane to the outer membrane. Only forms a complex with a lipoprotein if the residue after the N-terminal Cys is not an aspartate (The Asp acts as a targeting signal to indicate that the lipoprotein should stay in the inner membrane). This is Outer-membrane lipoprotein carrier protein from Cupriavidus pinatubonensis (strain JMP 134 / LMG 1197) (Cupriavidus necator (strain JMP 134)).